The following is a 441-amino-acid chain: MTSSVWQERRHGEDKQRRNDHRSPYQRDRARILHSAAFRRLQAKTQVLGVGMNDFYRTRLTHSLEVSQIGTGIAAQLSRKYPEHKPLLDSMSLLESLCLAHDIGHPPFGHGGEVALNYMMRHHGGFEGNGQTFRILSKLEPYTLDFGMNLCRRTMLGILKYPAPQSSLFIAGNHHEITNHRQLKPSQWPPVKGIFDDDNDIFDWVLEPLSAADRTRFTSAQPSIQPNYPHLRTQFKSFDCSIMELADDIAYAVHDLEDAIVMGIVTASQWQQDVAPTFEHSNDPWIRQELADIGTKLFSHEHHLRKDAIGTLVNGFVTAIIITDDGVFEEPLLRFNASLEVEFAHALNVLKQLVYKYVIRKPEIQMLEYKGQQIVMGLFEAFASDPERLLPLNTQERWRASEQLGLNSHRILADYISGMTDEFAGRLYQQLFTLRLDRTWS.

A disordered region spans residues 1 to 27 (MTSSVWQERRHGEDKQRRNDHRSPYQR). Over residues 7 to 27 (QERRHGEDKQRRNDHRSPYQR) the composition is skewed to basic and acidic residues. The region spanning 59 to 252 (RLTHSLEVSQ…MELADDIAYA (194 aa)) is the HD domain.

This sequence belongs to the dGTPase family. Type 2 subfamily.

The polypeptide is Deoxyguanosinetriphosphate triphosphohydrolase-like protein (Shewanella oneidensis (strain ATCC 700550 / JCM 31522 / CIP 106686 / LMG 19005 / NCIMB 14063 / MR-1)).